Reading from the N-terminus, the 381-residue chain is Erythronate-4-phosphate dehydrogenase (381 aa).

Residues S45 and T66 each contribute to the substrate site. NAD(+)-binding residues include D146 and T173. R206 is an active-site residue. D230 is a binding site for NAD(+). The active site involves E235. H252 functions as the Proton donor in the catalytic mechanism. Residue G255 participates in NAD(+) binding. Y256 serves as a coordination point for substrate.

The protein belongs to the D-isomer specific 2-hydroxyacid dehydrogenase family. PdxB subfamily. Homodimer.

Its subcellular location is the cytoplasm. The enzyme catalyses 4-phospho-D-erythronate + NAD(+) = (R)-3-hydroxy-2-oxo-4-phosphooxybutanoate + NADH + H(+). It functions in the pathway cofactor biosynthesis; pyridoxine 5'-phosphate biosynthesis; pyridoxine 5'-phosphate from D-erythrose 4-phosphate: step 2/5. Its function is as follows. Catalyzes the oxidation of erythronate-4-phosphate to 3-hydroxy-2-oxo-4-phosphonooxybutanoate. This Hahella chejuensis (strain KCTC 2396) protein is Erythronate-4-phosphate dehydrogenase.